A 355-amino-acid polypeptide reads, in one-letter code: MKRIVLTGGGTAGHVTPNIALIAGLKEQGYEIHYIGSYEGIERELIEKLGIPYHGISSGKLRRYLDIKNFSDPFKVLKGYREAKKLLKNLDPNVVFSKGGFVAVPVVLAAKKRKIPAIIHESDMTPGLANRLCIPSAAKVCANFPETLNYLPKEKAVLTGTPIRKELFSGNKIKGLDFCGFTANIPVLLIVGGSTGALKVNEAVRNLLPTLLKRFQVIHLCGKGKVDPSFNKHKGYVQYEYIGAELNHLFAAADIVISRAGANAICELLALRKPNILIPLSAAASRGDQILNAESFEHQGYSYVIKEEVLSNETLLQAVNHVFDNQKSYIEAMKNSNQNDAVDKIIGLIEEVRLK.

Residues 11–13 (TAG), Arg-164, Ser-194, and Gln-289 each bind UDP-N-acetyl-alpha-D-glucosamine.

This sequence belongs to the glycosyltransferase 28 family. MurG subfamily.

It is found in the cell membrane. The catalysed reaction is di-trans,octa-cis-undecaprenyl diphospho-N-acetyl-alpha-D-muramoyl-L-alanyl-D-glutamyl-meso-2,6-diaminopimeloyl-D-alanyl-D-alanine + UDP-N-acetyl-alpha-D-glucosamine = di-trans,octa-cis-undecaprenyl diphospho-[N-acetyl-alpha-D-glucosaminyl-(1-&gt;4)]-N-acetyl-alpha-D-muramoyl-L-alanyl-D-glutamyl-meso-2,6-diaminopimeloyl-D-alanyl-D-alanine + UDP + H(+). It participates in cell wall biogenesis; peptidoglycan biosynthesis. In terms of biological role, cell wall formation. Catalyzes the transfer of a GlcNAc subunit on undecaprenyl-pyrophosphoryl-MurNAc-pentapeptide (lipid intermediate I) to form undecaprenyl-pyrophosphoryl-MurNAc-(pentapeptide)GlcNAc (lipid intermediate II). This chain is UDP-N-acetylglucosamine--N-acetylmuramyl-(pentapeptide) pyrophosphoryl-undecaprenol N-acetylglucosamine transferase, found in Lachnoclostridium phytofermentans (strain ATCC 700394 / DSM 18823 / ISDg) (Clostridium phytofermentans).